The chain runs to 474 residues: Aromatic amino acid aminotransferase C56E4.03 (474 aa).

This sequence belongs to the class-I pyridoxal-phosphate-dependent aminotransferase family. The cofactor is pyridoxal 5'-phosphate.

It is found in the cytoplasm. The enzyme catalyses an aromatic L-alpha-amino acid + 2-oxoglutarate = an aromatic oxo-acid + L-glutamate. Has aromatic amino acid transaminase activity. The protein is Aromatic amino acid aminotransferase C56E4.03 of Schizosaccharomyces pombe (strain 972 / ATCC 24843) (Fission yeast).